The sequence spans 320 residues: Apolipoprotein E (320 aa).

A signal peptide spans 1–18 (MKVLWAALLVAFLAGCQG). 8 repeat units span residues 82-103 (ALME…EQLS), 104-125 (PVAE…ARLG), 126-147 (ADME…AMLG), 148-169 (QSTD…KRLL), 170-191 (RDVD…EGAE), 192-213 (RGVS…ARAA), 214-236 (TVGS…ERLR), and 237-258 (ARME…EQVE). The tract at residues 82–258 (ALMEETMKEL…RLDEVKEQVE (177 aa)) is 8 X 22 AA approximate tandem repeats. Methionine 145 carries the methionine sulfoxide modification. Serine 149 carries the phosphoserine modification. The tract at residues 160-170 (HLRKLRKRLLR) is LDL and other lipoprotein receptors binding. Position 164 to 167 (164 to 167 (LRKR)) interacts with heparin. Positions 212-293 (AATVGSSLAS…SWFEPLVEDM (82 aa)) are lipid-binding and lipoprotein association. An O-linked (GalNAc...) threonine glycan is attached at threonine 214. 232-239 (GERLRARM) provides a ligand contact to heparin. The tract at residues 269–320 (QQMRLQAEAFQARLKSWFEPLVEDMQRQWAGLVEKVQAAVGASTTPVPSDNH) is homooligomerization. The tract at residues 281-293 (RLKSWFEPLVEDM) is specificity for association with VLDL.

This sequence belongs to the apolipoprotein A1/A4/E family. As to quaternary structure, homotetramer. May interact with ABCA1; functionally associated with ABCA1 in the biogenesis of HDLs. May interact with APP/A4 amyloid-beta peptide; the interaction is extremely stable in vitro but its physiological significance is unclear. May interact with MAPT. May interact with MAP2. In the cerebrospinal fluid, interacts with secreted SORL1. Interacts with PMEL; this allows the loading of PMEL luminal fragment on ILVs to induce fibril nucleation. In terms of processing, APOE exists as multiple glycosylated and sialylated glycoforms within cells and in plasma. The extent of glycosylation and sialylation are tissue and context specific. Glycated in plasma VLDL. Post-translationally, phosphorylated by FAM20C in the extracellular medium.

Its subcellular location is the secreted. The protein resides in the extracellular space. It localises to the extracellular matrix. The protein localises to the extracellular vesicle. It is found in the endosome. Its subcellular location is the multivesicular body. Functionally, APOE is an apolipoprotein, a protein associating with lipid particles, that mainly functions in lipoprotein-mediated lipid transport between organs via the plasma and interstitial fluids. APOE is a core component of plasma lipoproteins and is involved in their production, conversion and clearance. Apolipoproteins are amphipathic molecules that interact both with lipids of the lipoprotein particle core and the aqueous environment of the plasma. As such, APOE associates with chylomicrons, chylomicron remnants, very low density lipoproteins (VLDL) and intermediate density lipoproteins (IDL) but shows a preferential binding to high-density lipoproteins (HDL). It also binds a wide range of cellular receptors including the LDL receptor/LDLR, the LDL receptor-related proteins LRP1, LRP2 and LRP8 and the very low-density lipoprotein receptor/VLDLR that mediate the cellular uptake of the APOE-containing lipoprotein particles. Finally, APOE also has a heparin-binding activity and binds heparan-sulfate proteoglycans on the surface of cells, a property that supports the capture and the receptor-mediated uptake of APOE-containing lipoproteins by cells. A main function of APOE is to mediate lipoprotein clearance through the uptake of chylomicrons, VLDLs, and HDLs by hepatocytes. APOE is also involved in the biosynthesis by the liver of VLDLs as well as their uptake by peripheral tissues ensuring the delivery of triglycerides and energy storage in muscle, heart and adipose tissues. By participating in the lipoprotein-mediated distribution of lipids among tissues, APOE plays a critical role in plasma and tissues lipid homeostasis. APOE is also involved in two steps of reverse cholesterol transport, the HDLs-mediated transport of cholesterol from peripheral tissues to the liver, and thereby plays an important role in cholesterol homeostasis. First, it is functionally associated with ABCA1 in the biogenesis of HDLs in tissues. Second, it is enriched in circulating HDLs and mediates their uptake by hepatocytes. APOE also plays an important role in lipid transport in the central nervous system, regulating neuron survival and sprouting. The chain is Apolipoprotein E (APOE) from Cebus capucinus (White-faced sapajou).